The primary structure comprises 232 residues: Probable GTP-binding protein EngB (232 aa).

The 176-residue stretch at 13–188 (IGLEVAFAGR…AGVMGNWYEY (176 aa)) folds into the EngB-type G domain. Residues 21-28 (GRSNAGKS), 48-52 (GRTQM), 67-70 (DLPG), 134-137 (TKAD), and 167-169 (FSA) each bind GTP. Serine 28 and threonine 50 together coordinate Mg(2+).

Belongs to the TRAFAC class TrmE-Era-EngA-EngB-Septin-like GTPase superfamily. EngB GTPase family. Mg(2+) is required as a cofactor.

Its function is as follows. Necessary for normal cell division and for the maintenance of normal septation. In Psychrobacter arcticus (strain DSM 17307 / VKM B-2377 / 273-4), this protein is Probable GTP-binding protein EngB.